Consider the following 263-residue polypeptide: Oxygen-evolving enhancer protein 2, chloroplastic (263 aa).

Residues 1–78 (MAAASCFHAL…VGTKVSPADA (78 aa)) constitute a chloroplast transit peptide. A compositionally biased stretch (low complexity) spans 14 to 30 (ARSSSSSLQSSSSRLPA). The interval 14–34 (ARSSSSSLQSSSSRLPAPIKP) is disordered.

It belongs to the PsbP family.

Its subcellular location is the plastid. It localises to the chloroplast thylakoid membrane. Its function is as follows. May be involved in the regulation of photosystem II. The chain is Oxygen-evolving enhancer protein 2, chloroplastic from Helianthus annuus (Common sunflower).